The chain runs to 397 residues: Acetate kinase 2 (397 aa).

Position 8 (Asn8) interacts with Mg(2+). Lys15 is a binding site for ATP. A substrate-binding site is contributed by Arg89. The active-site Proton donor/acceptor is the Asp146. Residues 206–210 (HLGNG), 281–283 (DLR), and 329–333 (GIGEN) contribute to the ATP site. Residue Glu382 coordinates Mg(2+).

The protein belongs to the acetokinase family. Homodimer. Mg(2+) serves as cofactor. Mn(2+) is required as a cofactor.

It is found in the cytoplasm. It carries out the reaction acetate + ATP = acetyl phosphate + ADP. Its pathway is metabolic intermediate biosynthesis; acetyl-CoA biosynthesis; acetyl-CoA from acetate: step 1/2. Catalyzes the formation of acetyl phosphate from acetate and ATP. Can also catalyze the reverse reaction. This chain is Acetate kinase 2, found in Listeria monocytogenes serotype 4b (strain F2365).